A 137-amino-acid polypeptide reads, in one-letter code: Cellular retinoic acid-binding protein 1 (137 aa).

The Nuclear localization signal signature appears at 21 to 31 (RALGVNAMLRK). All-trans-retinoate is bound at residue 132–134 (RIY).

Belongs to the calycin superfamily. Fatty-acid binding protein (FABP) family.

Its subcellular location is the cytoplasm. Its function is as follows. Cytosolic CRABPs may regulate the access of retinoic acid to the nuclear retinoic acid receptors. This Pelodiscus sinensis (Chinese softshell turtle) protein is Cellular retinoic acid-binding protein 1 (CRABP1).